An 872-amino-acid polypeptide reads, in one-letter code: Alanine--tRNA ligase (872 aa).

The Zn(2+) site is built by H567, H571, C669, and H673.

Belongs to the class-II aminoacyl-tRNA synthetase family. It depends on Zn(2+) as a cofactor.

The protein localises to the cytoplasm. The enzyme catalyses tRNA(Ala) + L-alanine + ATP = L-alanyl-tRNA(Ala) + AMP + diphosphate. Functionally, catalyzes the attachment of alanine to tRNA(Ala) in a two-step reaction: alanine is first activated by ATP to form Ala-AMP and then transferred to the acceptor end of tRNA(Ala). Also edits incorrectly charged Ser-tRNA(Ala) and Gly-tRNA(Ala) via its editing domain. The protein is Alanine--tRNA ligase of Streptococcus pneumoniae serotype 4 (strain ATCC BAA-334 / TIGR4).